The chain runs to 370 residues: MGQTLSEPVLDKHSSSGGDRWLHFGVSHMQGWRISMEDAHCALLNFTDSNSSNPPTSFFGVFDGHGGDRVAKYCRQHLPDIIKSQPSFWKGNYDEALKSGFLAADNALMQDRDMQEDPSGCTATTALIVDHQVIYCANAGDSRTVLGRKGTAEPLSFDHKPNNDVEKARITAAGGFIDFGRVNGSLALSRAIGDFEYKKDSSLPPEKQIVTAFPDVVIHNIDPDDEFLILACDGIWDCKSSQQVVEFVRRGIVARQSLEVICENLMDRCIASNSESCGIGCDNMTICIVAFLHGRGLEDWYNWITQRVNSGEGPCAPPSYAELRGPNTIADARNLQLEYDHIASHEYGSGDTYDSDSDDETIAYDRYYLH.

One can recognise a PPM-type phosphatase domain in the interval 23–291 (HFGVSHMQGW…DNMTICIVAF (269 aa)). Positions 63, 64, 233, and 282 each coordinate Mn(2+). Phosphoserine is present on residues serine 355 and serine 357.

It belongs to the PP2C family. As to quaternary structure, monomer. The cofactor is Mg(2+). It depends on Mn(2+) as a cofactor.

The protein resides in the nucleus. It is found in the cytoplasm. The protein localises to the cytosol. It carries out the reaction O-phospho-L-seryl-[protein] + H2O = L-seryl-[protein] + phosphate. The enzyme catalyses O-phospho-L-threonyl-[protein] + H2O = L-threonyl-[protein] + phosphate. Its activity is regulated as follows. Activity is reduced when phosphosrylated at Ser-355/Ser-357. Its function is as follows. Dephosphorylating regulator for many key proteins. Has an important role in osmotic stability and cell shape control. It may negatively regulate the osmosensing signal transmitted through wis1 map kinase. This Schizosaccharomyces pombe (strain 972 / ATCC 24843) (Fission yeast) protein is Protein phosphatase 2C homolog 2 (ptc2).